A 400-amino-acid chain; its full sequence is Phosphoglycerate kinase (400 aa).

Substrate contacts are provided by residues 24–26, Arg40, 63–66, Arg121, and Arg154; these read DFN and HFGR. ATP contacts are provided by residues Lys205, Gly296, Glu327, and 356 to 359; that span reads GGDS.

This sequence belongs to the phosphoglycerate kinase family. Monomer.

The protein localises to the cytoplasm. It catalyses the reaction (2R)-3-phosphoglycerate + ATP = (2R)-3-phospho-glyceroyl phosphate + ADP. It participates in carbohydrate degradation; glycolysis; pyruvate from D-glyceraldehyde 3-phosphate: step 2/5. This Nostoc punctiforme (strain ATCC 29133 / PCC 73102) protein is Phosphoglycerate kinase.